A 433-amino-acid chain; its full sequence is Glucose-6-phosphate isomerase (433 aa).

Glu-285 functions as the Proton donor in the catalytic mechanism. Active-site residues include His-306 and Lys-421.

This sequence belongs to the GPI family.

It is found in the cytoplasm. It carries out the reaction alpha-D-glucose 6-phosphate = beta-D-fructose 6-phosphate. The protein operates within carbohydrate biosynthesis; gluconeogenesis. It functions in the pathway carbohydrate degradation; glycolysis; D-glyceraldehyde 3-phosphate and glycerone phosphate from D-glucose: step 2/4. Catalyzes the reversible isomerization of glucose-6-phosphate to fructose-6-phosphate. The chain is Glucose-6-phosphate isomerase from Mycoplasma mobile (strain ATCC 43663 / 163K / NCTC 11711) (Mesomycoplasma mobile).